Consider the following 175-residue polypeptide: Auxin-responsive protein IAA28 (175 aa).

The tract at residues 1–39 (MEEEKRLELRLAPPCHQFTSNNNINGSKQKSSTKETSFL) is disordered. The EAR-like (transcriptional repression) motif lies at 7 to 11 (LELRL). A compositionally biased stretch (polar residues) spans 17 to 39 (QFTSNNNINGSKQKSSTKETSFL). The region spanning 80 to 161 (ELYVKINMEG…TVKRLHVLKT (82 aa)) is the PB1 domain.

This sequence belongs to the Aux/IAA family. As to quaternary structure, homodimers and heterodimers. Interacts with TPL. In terms of tissue distribution, in roots and inflorescence stems.

It is found in the nucleus. In terms of biological role, aux/IAA proteins are short-lived transcriptional factors that function as repressors of early auxin response genes at low auxin concentrations. Repression is thought to result from the interaction with auxin response factors (ARFs), proteins that bind to the auxin-responsive promoter element (AuxRE). Formation of heterodimers with ARF proteins may alter their ability to modulate early auxin response genes expression. The polypeptide is Auxin-responsive protein IAA28 (IAA28) (Arabidopsis thaliana (Mouse-ear cress)).